A 211-amino-acid polypeptide reads, in one-letter code: Protein-L-isoaspartate O-methyltransferase (211 aa).

Ser62 is a catalytic residue.

This sequence belongs to the methyltransferase superfamily. L-isoaspartyl/D-aspartyl protein methyltransferase family.

Its subcellular location is the cytoplasm. It carries out the reaction [protein]-L-isoaspartate + S-adenosyl-L-methionine = [protein]-L-isoaspartate alpha-methyl ester + S-adenosyl-L-homocysteine. In terms of biological role, catalyzes the methyl esterification of L-isoaspartyl residues in peptides and proteins that result from spontaneous decomposition of normal L-aspartyl and L-asparaginyl residues. It plays a role in the repair and/or degradation of damaged proteins. In Shewanella baltica (strain OS223), this protein is Protein-L-isoaspartate O-methyltransferase.